A 631-amino-acid chain; its full sequence is Nucleoside triphosphatase I (631 aa).

The 163-residue stretch at 42–204 (FLGLDSMHSL…TMLVNLLRPG (163 aa)) folds into the Helicase ATP-binding domain. Residue 55–62 (HETGVGKT) coordinates ATP. The DEXH box motif lies at 141–144 (DECH). The Helicase C-terminal domain maps to 367-532 (KFIDVCLGIL…EFVQLFRVFK (166 aa)). The segment at 457 to 524 (DIFILDMTWN…EIIQSKSKEF (68 aa)) is binding to the cap-specific mRNA (nucleoside-2'-O-)-methyltransferase.

This sequence belongs to the helicase family. NPH I subfamily. As to quaternary structure, monomer. Interacts (via C-terminus) with RAP94/OPG109 (via N-terminus). Interacts with the cap-specific mRNA (nucleoside-2'-O-)-methyltransferase OPG102.

The protein resides in the virion. The enzyme catalyses a ribonucleoside 5'-triphosphate + H2O = a ribonucleoside 5'-diphosphate + phosphate + H(+). Functionally, DNA-dependent ATPase that acts as a 5' to 3' translocase on single-stranded DNA and thereby plays a role in transcription termination of viral early genes. Uses forward translocation in concert with the viral RNA polymerase RAP94/OPG109 subunit and the capping enzyme/VTF to catalyze release of UUUUUNU-containing nascent RNA from the elongation complex. In addition, acts as a positive elongation factor to assist transcription through problematic sequences. This chain is Nucleoside triphosphatase I (OPG123), found in Vaccinia virus (strain Copenhagen) (VACV).